Here is a 274-residue protein sequence, read N- to C-terminus: Guanylyl cyclase 1 (274 aa).

In terms of assembly, functions both as monomer and homooligomer. The cofactor is Mg(2+).

It catalyses the reaction GTP = 3',5'-cyclic GMP + diphosphate. The protein operates within nucleotide metabolism. In terms of biological role, magnesium-dependent guanylyl cyclase that catalyzes the formation of guanosine 3',5'-cyclic monophosphate (cGMP) from guanosine 5'-triphosphate (GTP). Can also use ATP as substrate with a low activity. This chain is Guanylyl cyclase 1, found in Arabidopsis thaliana (Mouse-ear cress).